Here is a 399-residue protein sequence, read N- to C-terminus: Formaldehyde dismutase (399 aa).

A Zn(2+)-binding site is contributed by C46. 47–51 (GSDQH) contributes to the NAD(+) binding site. Zn(2+) is bound by residues H67, C97, C100, C103, C111, and D170. T174 is an NAD(+) binding site. Residue H177 participates in Zn(2+) binding. Residues 197-198 (PV), 218-219 (DQ), R223, V263, H268, P299, 299-301 (PGI), and 336-338 (GMA) each bind NAD(+).

Belongs to the zinc-containing alcohol dehydrogenase family. In terms of assembly, homotetramer. It depends on Zn(2+) as a cofactor. Requires NAD(+) as cofactor. NADH serves as cofactor.

It catalyses the reaction 2 formaldehyde + H2O = methanol + formate + H(+). Inhibited by the substrate analog pyrazole but not by NAD analogs such as AMP, ADP, ATP or N-methylnicotinamide chloride. Its function is as follows. Active against a range of primary alcohols as well as some secondary alcohols. Exhibits higher activity against alcohols with longer carbon chains. In Pseudomonas putida (Arthrobacter siderocapsulatus), this protein is Formaldehyde dismutase.